Reading from the N-terminus, the 345-residue chain is Holliday junction branch migration complex subunit RuvB (345 aa).

The interval 1-186 is large ATPase domain (RuvB-L); that stretch reads MSTDPDEREV…FGFTAHMDFY (186 aa). Residues Leu-25, Arg-26, Gly-67, Lys-70, Thr-71, Ser-72, 133–135, Arg-176, Tyr-186, and Arg-223 each bind ATP; that span reads EDF. Thr-71 serves as a coordination point for Mg(2+). The interval 187–257 is small ATPAse domain (RuvB-S); the sequence is EPAELERVLV…VAKAALAVYD (71 aa). Positions 260–345 are head domain (RuvB-H); the sequence is ELGLDRLDRA…AGANQPGLFE (86 aa). Residues Arg-315 and Arg-320 each contribute to the DNA site.

The protein belongs to the RuvB family. In terms of assembly, homohexamer. Forms an RuvA(8)-RuvB(12)-Holliday junction (HJ) complex. HJ DNA is sandwiched between 2 RuvA tetramers; dsDNA enters through RuvA and exits via RuvB. An RuvB hexamer assembles on each DNA strand where it exits the tetramer. Each RuvB hexamer is contacted by two RuvA subunits (via domain III) on 2 adjacent RuvB subunits; this complex drives branch migration. In the full resolvosome a probable DNA-RuvA(4)-RuvB(12)-RuvC(2) complex forms which resolves the HJ.

The protein localises to the cytoplasm. It carries out the reaction ATP + H2O = ADP + phosphate + H(+). The RuvA-RuvB-RuvC complex processes Holliday junction (HJ) DNA during genetic recombination and DNA repair, while the RuvA-RuvB complex plays an important role in the rescue of blocked DNA replication forks via replication fork reversal (RFR). RuvA specifically binds to HJ cruciform DNA, conferring on it an open structure. The RuvB hexamer acts as an ATP-dependent pump, pulling dsDNA into and through the RuvAB complex. RuvB forms 2 homohexamers on either side of HJ DNA bound by 1 or 2 RuvA tetramers; 4 subunits per hexamer contact DNA at a time. Coordinated motions by a converter formed by DNA-disengaged RuvB subunits stimulates ATP hydrolysis and nucleotide exchange. Immobilization of the converter enables RuvB to convert the ATP-contained energy into a lever motion, pulling 2 nucleotides of DNA out of the RuvA tetramer per ATP hydrolyzed, thus driving DNA branch migration. The RuvB motors rotate together with the DNA substrate, which together with the progressing nucleotide cycle form the mechanistic basis for DNA recombination by continuous HJ branch migration. Branch migration allows RuvC to scan DNA until it finds its consensus sequence, where it cleaves and resolves cruciform DNA. The protein is Holliday junction branch migration complex subunit RuvB of Mycobacterium marinum (strain ATCC BAA-535 / M).